A 375-amino-acid chain; its full sequence is Lipid-A-disaccharide synthase (375 aa).

The protein belongs to the LpxB family.

It carries out the reaction a lipid X + a UDP-2-N,3-O-bis[(3R)-3-hydroxyacyl]-alpha-D-glucosamine = a lipid A disaccharide + UDP + H(+). It participates in bacterial outer membrane biogenesis; LPS lipid A biosynthesis. Condensation of UDP-2,3-diacylglucosamine and 2,3-diacylglucosamine-1-phosphate to form lipid A disaccharide, a precursor of lipid A, a phosphorylated glycolipid that anchors the lipopolysaccharide to the outer membrane of the cell. The protein is Lipid-A-disaccharide synthase of Pseudomonas putida (strain ATCC 47054 / DSM 6125 / CFBP 8728 / NCIMB 11950 / KT2440).